We begin with the raw amino-acid sequence, 200 residues long: MAKKTYDLLFKLLLIGDSGVGKTCVLFRFSDDAFNTTFISTIGIDFKIKTVELHGKKIKLQIWDTAGQERFHTITTSYYRGAMGIMLVYDITNAKSFENISKWLRNIDEHANEDVERMLLGNKCDMEDKRVVLKSKGEQIAREHAIRFFETSAKANINIEKAFLTLAEDILQKTPVKEPDRENVDISTTGGGTGLKKCCS.

GTP is bound by residues serine 18, glycine 19, valine 20, glycine 21, lysine 22, threonine 23, cysteine 24, asparagine 35, threonine 36, serine 40, and threonine 41. Mg(2+) is bound at residue threonine 23. 2 consecutive short sequence motifs (switch) follow at residues 32–46 and 64–81; these read DAFNTTFISTIGIDF and DTAGQERFHTITTSYYRG. Residues threonine 41 and aspartate 64 each coordinate Mg(2+). GTP contacts are provided by glycine 67, asparagine 122, lysine 123, aspartate 125, methionine 126, serine 152, alanine 153, and lysine 154. The tract at residues 181 to 200 is disordered; sequence RENVDISTTGGGTGLKKCCS. Residues cysteine 198 and cysteine 199 are each lipidated (S-geranylgeranyl cysteine).

Belongs to the small GTPase superfamily. Rab family. The cofactor is Mg(2+).

Its subcellular location is the cytoplasmic vesicle membrane. The protein localises to the golgi apparatus. The protein resides in the trans-Golgi network membrane. It localises to the endosome membrane. It is found in the recycling endosome membrane. Its subcellular location is the cytoplasmic vesicle. The protein localises to the phagosome membrane. The protein resides in the cell projection. It localises to the cilium. It is found in the endoplasmic reticulum membrane. The catalysed reaction is GTP + H2O = GDP + phosphate + H(+). With respect to regulation, regulated by guanine nucleotide exchange factors (GEFs) which promote the exchange of bound GDP for free GTP. Regulated by GTPase activating proteins (GAPs) which increase the GTP hydrolysis activity. Inhibited by GDP dissociation inhibitors (GDIs) which prevent Rab-GDP dissociation. Functionally, the small GTPases Rab are key regulators of intracellular membrane trafficking, from the formation of transport vesicles to their fusion with membranes. Rabs cycle between an inactive GDP-bound form and an active GTP-bound form that is able to recruit to membranes different set of downstream effectors directly responsible for vesicle formation, movement, tethering and fusion. That Rab is mainly involved in the biosynthetic transport of proteins from the Golgi to the plasma membrane. Also plays a specific role in asymmetric protein transport to the plasma membrane within the polarized neuron and epithelial cells. In neurons, it is involved in axonogenesis through regulation of vesicular membrane trafficking toward the axonal plasma membrane while in epithelial cells, it regulates transport from the Golgi to the basolateral membrane. Moreover, may play a role in the basolateral recycling pathway and in phagosome maturation. Finally, may play a role in endoplasmic reticulum dynamics and morphology controlling tubulation along microtubules and tubules fusion. May participate in the export of neosynthesized proteins through a Rab-dependent endosomal export route. The polypeptide is Ras-related protein Rab-10 (Diplobatis ommata (Ocellated electric ray)).